The sequence spans 805 residues: Sucrose synthase 1 (805 aa).

Positions 274-751 are GT-B glycosyltransferase; it reads MVFNVVILSP…GLQRIYEKYT (478 aa).

Belongs to the glycosyltransferase 1 family. Plant sucrose synthase subfamily.

The catalysed reaction is an NDP-alpha-D-glucose + D-fructose = a ribonucleoside 5'-diphosphate + sucrose + H(+). In terms of biological role, sucrose-cleaving enzyme that provides UDP-glucose and fructose for various metabolic pathways. In Tulipa gesneriana (Garden tulip), this protein is Sucrose synthase 1.